The primary structure comprises 184 residues: NADH-quinone oxidoreductase subunit B (184 aa).

Cys-37, Cys-38, Cys-103, and Cys-132 together coordinate [4Fe-4S] cluster.

Belongs to the complex I 20 kDa subunit family. As to quaternary structure, NDH-1 is composed of 14 different subunits. Subunits NuoB, C, D, E, F, and G constitute the peripheral sector of the complex. Requires [4Fe-4S] cluster as cofactor.

It localises to the cell membrane. The enzyme catalyses a quinone + NADH + 5 H(+)(in) = a quinol + NAD(+) + 4 H(+)(out). In terms of biological role, NDH-1 shuttles electrons from NADH, via FMN and iron-sulfur (Fe-S) centers, to quinones in the respiratory chain. The immediate electron acceptor for the enzyme in this species is believed to be a menaquinone. Couples the redox reaction to proton translocation (for every two electrons transferred, four hydrogen ions are translocated across the cytoplasmic membrane), and thus conserves the redox energy in a proton gradient. The polypeptide is NADH-quinone oxidoreductase subunit B (Mycolicibacterium vanbaalenii (strain DSM 7251 / JCM 13017 / BCRC 16820 / KCTC 9966 / NRRL B-24157 / PYR-1) (Mycobacterium vanbaalenii)).